A 202-amino-acid polypeptide reads, in one-letter code: Small ribosomal subunit protein uS4c (202 aa).

Residues 90-158 (MRSDNVIFRL…ISKNIELYQK (69 aa)) enclose the S4 RNA-binding domain.

It belongs to the universal ribosomal protein uS4 family. Part of the 30S ribosomal subunit. Contacts protein S5. The interaction surface between S4 and S5 is involved in control of translational fidelity.

Its subcellular location is the plastid. The protein localises to the chloroplast. Functionally, one of the primary rRNA binding proteins, it binds directly to 16S rRNA where it nucleates assembly of the body of the 30S subunit. In terms of biological role, with S5 and S12 plays an important role in translational accuracy. This chain is Small ribosomal subunit protein uS4c (rps4), found in Exsertotheca crispa (Moss).